Here is a 577-residue protein sequence, read N- to C-terminus: Galectin-3-binding protein (577 aa).

Residues 1 to 18 (MALLWLLSVFLLVPGTQG) form the signal peptide. Residues 24–124 (MRLVNGASAN…HEKDAGVVCS (101 aa)) enclose the SRCR domain. 3 cysteine pairs are disulfide-bonded: Cys-49–Cys-113, Cys-62–Cys-123, and Cys-93–Cys-103. Asn-69 carries N-linked (GlcNAc...) asparagine glycosylation. The N-linked (GlcNAc...) asparagine glycan is linked to Asn-125. In terms of domain architecture, BTB spans 153–221 (CDLFIQVTGQ…FYSRRIEVSM (69 aa)). Positions 260-360 (PLDLYAYARA…MLPQELFELQ (101 aa)) constitute a BACK domain. Residues Asn-362, Asn-398, Asn-543, and Asn-572 are each glycosylated (N-linked (GlcNAc...) asparagine).

In terms of assembly, homodimers and homomultimers. The multimers form ring-like structures with a diameter of 30-40 nm. Binds LGALS1 and LGALS3. Binds ITGB1, COL4A1, COL5A1, COL6A1, FN1 and NID. Interacts with PPIC (in vitro). The unglycosylated form interacts with PDE4DIP isoform 2/MMG8/SMYLE; this interaction may connect a pericentrosomal complex to the gamma-tubulin ring complex (gamma-TuRC) to promote microtubule assembly and acetylation. Post-translationally, N-glycosylated. As to expression, detected in embryo, liver, spleen, kidney, lung, heart, intestine, thymus and lymph node.

Its subcellular location is the secreted. The protein localises to the extracellular space. It localises to the extracellular matrix. In terms of biological role, promotes integrin-mediated cell adhesion. May stimulate host defense against viruses and tumor cells. The polypeptide is Galectin-3-binding protein (Lgals3bp) (Mus musculus (Mouse)).